The sequence spans 303 residues: MKVIFMGTPEFAVPALKKLITHHEVKAVFTQQPKAKGRGLNLAKSPIHQLAFEHQIPVYTPSTLRNDEIINLINKVNADIIVVIAYGFIVPKAILEAKKYGCLNIHPSDLPRHRGAAPLQRTIIEGDRKSSVCIMRMDTGLDTGDILMKEDFDLEERITLEELHNKCANLGAELLIKTLANIDNIVPITQPSDGVTYAHKLTKAEGKINWHESAYKIDCKIRGMNPWPGVYFSYNDKIIKILEAEYLNADHHFTSGTVISDKLEIACGSGILRVKKLQQESKKALNIEEFLRGTNILKDTVLK.

108–111 contributes to the (6S)-5,6,7,8-tetrahydrofolate binding site; that stretch reads SDLP.

This sequence belongs to the Fmt family.

It carries out the reaction L-methionyl-tRNA(fMet) + (6R)-10-formyltetrahydrofolate = N-formyl-L-methionyl-tRNA(fMet) + (6S)-5,6,7,8-tetrahydrofolate + H(+). Functionally, attaches a formyl group to the free amino group of methionyl-tRNA(fMet). The formyl group appears to play a dual role in the initiator identity of N-formylmethionyl-tRNA by promoting its recognition by IF2 and preventing the misappropriation of this tRNA by the elongation apparatus. This Rickettsia peacockii (strain Rustic) protein is Methionyl-tRNA formyltransferase.